Consider the following 214-residue polypeptide: Anti-sigma-F factor NrsF (214 aa).

At 1–25 (MRTDDLIDALAADAGRGTEPAPPRR) the chain is on the cytoplasmic side. The helical transmembrane segment at 26 to 46 (LALVAGLGGVAALLLVLGWLQ) threads the bilayer. Residues 47-53 (ARPDLGQ) lie on the Periplasmic side of the membrane. A helical membrane pass occupies residues 54-74 (AILGPMFWVKAIYTGLLGLAG). At 75-90 (YLAVERLSRPGGSGRR) the chain is on the cytoplasmic side. Residues 91–111 (GWIIGAVVFGACAVAGIYQAI) traverse the membrane as a helical segment. Residues 112–134 (TSPDVQAALKLLHGYSWRSCSPR) lie on the Periplasmic side of the membrane. A helical membrane pass occupies residues 135 to 155 (ILVLGLPMLALGLWALRGMAP). Residues 156-158 (TRP) are Cytoplasmic-facing. Residues 159-179 (GLAGFAMGLFSGGVVATLYGL) form a helical membrane-spanning segment. Residues 180 to 185 (HCPEHT) are Periplasmic-facing. Residues 186 to 206 (FTFLALWYSLGVLALGLIGGW) form a helical membrane-spanning segment. Residues 207–214 (AGRWLLRW) lie on the Cytoplasmic side of the membrane.

Belongs to the NrsF anti-sigma-F factor family.

It is found in the cell inner membrane. Functionally, an anti-sigma factor for extracytoplasmic function (ECF) sigma factor sigma-F (SigF), which responds to chromate and cadmium. Overexpression leads to loss of response to dichromate. ECF sigma factors are held in an inactive form by a cognate anti-sigma factor. This chain is Anti-sigma-F factor NrsF, found in Caulobacter vibrioides (strain NA1000 / CB15N) (Caulobacter crescentus).